Reading from the N-terminus, the 448-residue chain is Probable glucuronoxylan glucuronosyltransferase IRX7 (448 aa).

The Cytoplasmic segment spans residues Met1–Lys16. A helical; Signal-anchor for type II membrane protein transmembrane segment spans residues Gln17 to Val37. The Lumenal segment spans residues Asp38–Leu448. 5 N-linked (GlcNAc...) asparagine glycosylation sites follow: Asn157, Asn189, Asn287, Asn397, and Asn438.

This sequence belongs to the glycosyltransferase 47 family. As to expression, expressed in developing interfascicular fibers and xylem cells in stems and developing secondary xylem in roots.

Its subcellular location is the golgi apparatus membrane. Its function is as follows. Involved in the synthesis of the hemicellulose glucuronoxylan, a major component of secondary cell walls. Probably involved in the synthesis of the glycosyl sequence at the glucuronoxylan reducing end. This chain is Probable glucuronoxylan glucuronosyltransferase IRX7 (IRX7), found in Arabidopsis thaliana (Mouse-ear cress).